The primary structure comprises 940 residues: Phagocyte signaling-impaired protein (940 aa).

A TPR repeat occupies 77–110 (STTLHVMTLCYKETDQLDKICQIFTSASKQLPGN).

It belongs to the MDM20/NAA25 family. Component of the N-terminal acetyltransferase B (NatB) complex.

Its subcellular location is the lysosome. Its function is as follows. Non-catalytic subunit of the NatB complex which catalyzes acetylation of the N-terminal methionine residues of proteins beginning with Met-Asp or Met-Glu. Has 2 roles in the larval immune response: required both for the phagocytic degradation of internalized bacteria and for the induction of Defensin in the fat body. Within the phagocytic blood cells, has a role in detection of infection and activation of the humoral immune response. The polypeptide is Phagocyte signaling-impaired protein (Aedes aegypti (Yellowfever mosquito)).